Consider the following 234-residue polypeptide: Protein rgg8 (234 aa).

The protein localises to the cytoplasm. It is found in the nucleus. This chain is Protein rgg8 (rgg8), found in Schizosaccharomyces pombe (strain 972 / ATCC 24843) (Fission yeast).